Consider the following 107-residue polypeptide: Nucleoid-associated protein RBE_0048 (107 aa).

The protein belongs to the YbaB/EbfC family. Homodimer.

It localises to the cytoplasm. It is found in the nucleoid. In terms of biological role, binds to DNA and alters its conformation. May be involved in regulation of gene expression, nucleoid organization and DNA protection. This chain is Nucleoid-associated protein RBE_0048, found in Rickettsia bellii (strain RML369-C).